Consider the following 528-residue polypeptide: Light-independent protochlorophyllide reductase subunit B (528 aa).

Asp36 lines the [4Fe-4S] cluster pocket. Asp274 serves as the catalytic Proton donor. Substrate is bound at residue 409–410 (GL). The segment at 429 to 471 (GPSHHGGHAPKPMHDAPAASAAAGAEASMAEETAAPSQDAPAA) is disordered. A compositionally biased stretch (low complexity) spans 444–465 (APAASAAAGAEASMAEETAAPS).

This sequence belongs to the ChlB/BchB/BchZ family. Protochlorophyllide reductase is composed of three subunits; BchL, BchN and BchB. Forms a heterotetramer of two BchB and two BchN subunits. [4Fe-4S] cluster is required as a cofactor.

It catalyses the reaction chlorophyllide a + oxidized 2[4Fe-4S]-[ferredoxin] + 2 ADP + 2 phosphate = protochlorophyllide a + reduced 2[4Fe-4S]-[ferredoxin] + 2 ATP + 2 H2O. Its pathway is porphyrin-containing compound metabolism; bacteriochlorophyll biosynthesis (light-independent). Component of the dark-operative protochlorophyllide reductase (DPOR) that uses Mg-ATP and reduced ferredoxin to reduce ring D of protochlorophyllide (Pchlide) to form chlorophyllide a (Chlide). This reaction is light-independent. The NB-protein (BchN-BchB) is the catalytic component of the complex. This chain is Light-independent protochlorophyllide reductase subunit B, found in Dinoroseobacter shibae (strain DSM 16493 / NCIMB 14021 / DFL 12).